Reading from the N-terminus, the 397-residue chain is Succinate--CoA ligase [ADP-forming] subunit beta (397 aa).

The ATP-grasp domain maps to lysine 9–alanine 254. ATP contacts are provided by residues lysine 46, glycine 53–glycine 55, glutamate 109, serine 112, and glutamate 117. Mg(2+)-binding residues include asparagine 209 and aspartate 223. Substrate-binding positions include asparagine 274 and glycine 331–methionine 333.

This sequence belongs to the succinate/malate CoA ligase beta subunit family. As to quaternary structure, heterotetramer of two alpha and two beta subunits. Requires Mg(2+) as cofactor.

It carries out the reaction succinate + ATP + CoA = succinyl-CoA + ADP + phosphate. It catalyses the reaction GTP + succinate + CoA = succinyl-CoA + GDP + phosphate. Its pathway is carbohydrate metabolism; tricarboxylic acid cycle; succinate from succinyl-CoA (ligase route): step 1/1. Functionally, succinyl-CoA synthetase functions in the citric acid cycle (TCA), coupling the hydrolysis of succinyl-CoA to the synthesis of either ATP or GTP and thus represents the only step of substrate-level phosphorylation in the TCA. The beta subunit provides nucleotide specificity of the enzyme and binds the substrate succinate, while the binding sites for coenzyme A and phosphate are found in the alpha subunit. This chain is Succinate--CoA ligase [ADP-forming] subunit beta, found in Cereibacter sphaeroides (strain ATCC 17029 / ATH 2.4.9) (Rhodobacter sphaeroides).